Consider the following 758-residue polypeptide: 5-methyltetrahydropteroyltriglutamate--homocysteine methyltransferase (758 aa).

5-methyltetrahydropteroyltri-L-glutamate-binding positions include Arg16–Lys19 and Lys116. Residues Ile436–Ser438 and Glu489 contribute to the L-homocysteine site. L-methionine contacts are provided by residues Ile436–Ser438 and Glu489. 5-methyltetrahydropteroyltri-L-glutamate contacts are provided by residues Arg520–Cys521 and Trp566. Asp604 contacts L-homocysteine. Asp604 contributes to the L-methionine binding site. Position 610 (Glu610) interacts with 5-methyltetrahydropteroyltri-L-glutamate. Zn(2+)-binding residues include His646, Cys648, and Glu670. His699 serves as the catalytic Proton donor. Residue Cys731 coordinates Zn(2+).

It belongs to the vitamin-B12 independent methionine synthase family. The cofactor is Zn(2+).

The enzyme catalyses 5-methyltetrahydropteroyltri-L-glutamate + L-homocysteine = tetrahydropteroyltri-L-glutamate + L-methionine. Its pathway is amino-acid biosynthesis; L-methionine biosynthesis via de novo pathway; L-methionine from L-homocysteine (MetE route): step 1/1. In terms of biological role, catalyzes the transfer of a methyl group from 5-methyltetrahydrofolate to homocysteine resulting in methionine formation. This chain is 5-methyltetrahydropteroyltriglutamate--homocysteine methyltransferase, found in Nitrosococcus oceani (strain ATCC 19707 / BCRC 17464 / JCM 30415 / NCIMB 11848 / C-107).